Reading from the N-terminus, the 61-residue chain is Small ribosomal subunit protein uS14 (61 aa).

The Zn(2+) site is built by C24, C27, C40, and C43.

It belongs to the universal ribosomal protein uS14 family. Zinc-binding uS14 subfamily. As to quaternary structure, part of the 30S ribosomal subunit. Contacts proteins S3 and S10. It depends on Zn(2+) as a cofactor.

In terms of biological role, binds 16S rRNA, required for the assembly of 30S particles and may also be responsible for determining the conformation of the 16S rRNA at the A site. The polypeptide is Small ribosomal subunit protein uS14 (Malacoplasma penetrans (strain HF-2) (Mycoplasma penetrans)).